The chain runs to 881 residues: Translation initiation factor IF-2 (881 aa).

Disordered stretches follow at residues 53-92 and 163-292; these read RSHG…SKTT and AEAE…FERP. The segment covering 81 to 92 has biased composition (polar residues); the sequence is EVTVNSGRSKTT. The segment covering 172–186 has biased composition (low complexity); it reads EAAAAAKAAEALAAA. The span at 219 to 236 shows a compositional bias: basic and acidic residues; sequence RNDDRNNRSAPRNERGPG. Over residues 254 to 263 the composition is skewed to low complexity; the sequence is GNSNNSNTRG. The tr-type G domain maps to 380 to 549; sequence QRPPVVTIMG…SIQAELLELK (170 aa). Residues 389–396 are G1; that stretch reads GHVDHGKT. A GTP-binding site is contributed by 389-396; sequence GHVDHGKT. The G2 stretch occupies residues 414–418; that stretch reads GITQH. The tract at residues 435-438 is G3; sequence DTPG. GTP contacts are provided by residues 435–439 and 489–492; these read DTPGH and NKID. A G4 region spans residues 489 to 492; sequence NKID. The interval 525 to 527 is G5; it reads SAK.

Belongs to the TRAFAC class translation factor GTPase superfamily. Classic translation factor GTPase family. IF-2 subfamily.

Its subcellular location is the cytoplasm. Its function is as follows. One of the essential components for the initiation of protein synthesis. Protects formylmethionyl-tRNA from spontaneous hydrolysis and promotes its binding to the 30S ribosomal subunits. Also involved in the hydrolysis of GTP during the formation of the 70S ribosomal complex. The protein is Translation initiation factor IF-2 of Stenotrophomonas maltophilia (strain K279a).